Here is a 529-residue protein sequence, read N- to C-terminus: GMP synthase [glutamine-hydrolyzing] (529 aa).

Residues 9-211 form the Glutamine amidotransferase type-1 domain; the sequence is RILILDFGSQ…VKDICGCECL (203 aa). The Nucleophile role is filled by Cys86. Catalysis depends on residues His185 and Glu187. The GMPS ATP-PPase domain maps to 212 to 404; it reads WTPATIIDDA…LGLPYDMLYR (193 aa). 239-245 is a binding site for ATP; it reads SGGVDSS.

As to quaternary structure, homodimer.

It carries out the reaction XMP + L-glutamine + ATP + H2O = GMP + L-glutamate + AMP + diphosphate + 2 H(+). It participates in purine metabolism; GMP biosynthesis; GMP from XMP (L-Gln route): step 1/1. In terms of biological role, catalyzes the synthesis of GMP from XMP. The chain is GMP synthase [glutamine-hydrolyzing] from Aeromonas hydrophila subsp. hydrophila (strain ATCC 7966 / DSM 30187 / BCRC 13018 / CCUG 14551 / JCM 1027 / KCTC 2358 / NCIMB 9240 / NCTC 8049).